A 308-amino-acid chain; its full sequence is Testis-specific Y-encoded protein 8 (308 aa).

It belongs to the nucleosome assembly protein (NAP) family.

It is found in the cytoplasm. It localises to the nucleus. In terms of biological role, may be involved in sperm differentiation and proliferation. In Homo sapiens (Human), this protein is Testis-specific Y-encoded protein 8 (TSPY8).